The primary structure comprises 252 residues: Triosephosphate isomerase (252 aa).

10-12 (NWK) lines the substrate pocket. Catalysis depends on His96, which acts as the Electrophile. The active-site Proton acceptor is Glu168. Substrate is bound by residues Gly174, Ser214, and 235 to 236 (GG).

The protein belongs to the triosephosphate isomerase family. Homodimer.

The protein localises to the cytoplasm. The enzyme catalyses D-glyceraldehyde 3-phosphate = dihydroxyacetone phosphate. It participates in carbohydrate biosynthesis; gluconeogenesis. Its pathway is carbohydrate degradation; glycolysis; D-glyceraldehyde 3-phosphate from glycerone phosphate: step 1/1. Functionally, involved in the gluconeogenesis. Catalyzes stereospecifically the conversion of dihydroxyacetone phosphate (DHAP) to D-glyceraldehyde-3-phosphate (G3P). The sequence is that of Triosephosphate isomerase from Streptococcus equi subsp. zooepidemicus (strain MGCS10565).